A 282-amino-acid chain; its full sequence is Shikimate dehydrogenase (NADP(+)) (282 aa).

Residues 18–20 (SRS) and threonine 65 contribute to the shikimate site. The Proton acceptor role is filled by lysine 69. Residue glutamate 81 participates in NADP(+) binding. Positions 90 and 105 each coordinate shikimate. NADP(+) contacts are provided by residues 130-134 (GAGGA), 154-159 (NRTPAR), and methionine 222. Position 224 (tyrosine 224) interacts with shikimate. Glycine 245 provides a ligand contact to NADP(+).

Belongs to the shikimate dehydrogenase family. Homodimer.

It carries out the reaction shikimate + NADP(+) = 3-dehydroshikimate + NADPH + H(+). Its pathway is metabolic intermediate biosynthesis; chorismate biosynthesis; chorismate from D-erythrose 4-phosphate and phosphoenolpyruvate: step 4/7. In terms of biological role, involved in the biosynthesis of the chorismate, which leads to the biosynthesis of aromatic amino acids. Catalyzes the reversible NADPH linked reduction of 3-dehydroshikimate (DHSA) to yield shikimate (SA). The polypeptide is Shikimate dehydrogenase (NADP(+)) (Acidovorax ebreus (strain TPSY) (Diaphorobacter sp. (strain TPSY))).